The primary structure comprises 923 residues: Mitochondrial 10-formyltetrahydrofolate dehydrogenase (923 aa).

Residues 1–19 (MLWRGSQALRHFSTSRVYF) constitute a mitochondrion; not cleaved transit peptide. The interval 23 to 331 (LKLALIGQSL…PASQYFSAGE (309 aa)) is hydrolase domain. S31 carries the phosphoserine modification. An N6-succinyllysine modification is found at K60. A (6R)-10-formyltetrahydrofolate-binding site is contributed by 110-112 (QFI). Residue H128 is the Proton donor of the active site. (6R)-10-formyltetrahydrofolate is bound at residue D164. The region spanning 339–416 (AEELKVAETI…DFIQKVVRRL (78 aa)) is the Carrier domain. S375 bears the O-(pantetheine 4'-phosphoryl)serine mark. Positions 438 to 923 (TVKIPYQCFI…LKIKTVTLEY (486 aa)) are aldehyde dehydrogenase domain. NADP(+) contacts are provided by residues 592-594 (IPW) and 618-621 (KPAQ). The residue at position 650 (S650) is a Phosphoserine. NADP(+)-binding positions include 651 to 656 (GGVAGQ) and 671 to 672 (GS). K681 bears the N6-succinyllysine mark. E694 functions as the Proton acceptor in the catalytic mechanism. NADP(+) is bound at residue 694-695 (EL). Residue C728 is the Proton donor of the active site. NADP(+) contacts are provided by residues K778 and 825–827 (ESF). N6-acetyllysine is present on K903.

In the N-terminal section; belongs to the GART family. This sequence in the C-terminal section; belongs to the aldehyde dehydrogenase family. ALDH1L subfamily. Phosphopantetheinylation at Ser-375 by AASDHPPT is required for the formyltetrahydrofolate dehydrogenase activity.

Its subcellular location is the mitochondrion. The enzyme catalyses (6R)-10-formyltetrahydrofolate + NADP(+) + H2O = (6S)-5,6,7,8-tetrahydrofolate + CO2 + NADPH + H(+). Functionally, mitochondrial 10-formyltetrahydrofolate dehydrogenase that catalyzes the NADP(+)-dependent conversion of 10-formyltetrahydrofolate to tetrahydrofolate and carbon dioxide. This Mus musculus (Mouse) protein is Mitochondrial 10-formyltetrahydrofolate dehydrogenase.